A 356-amino-acid chain; its full sequence is Histidinol-phosphate aminotransferase (356 aa).

The residue at position 214 (Lys214) is an N6-(pyridoxal phosphate)lysine.

Belongs to the class-II pyridoxal-phosphate-dependent aminotransferase family. Histidinol-phosphate aminotransferase subfamily. In terms of assembly, homodimer. The cofactor is pyridoxal 5'-phosphate.

It catalyses the reaction L-histidinol phosphate + 2-oxoglutarate = 3-(imidazol-4-yl)-2-oxopropyl phosphate + L-glutamate. It participates in amino-acid biosynthesis; L-histidine biosynthesis; L-histidine from 5-phospho-alpha-D-ribose 1-diphosphate: step 7/9. The sequence is that of Histidinol-phosphate aminotransferase from Escherichia fergusonii (strain ATCC 35469 / DSM 13698 / CCUG 18766 / IAM 14443 / JCM 21226 / LMG 7866 / NBRC 102419 / NCTC 12128 / CDC 0568-73).